The primary structure comprises 346 residues: D-alanine--D-alanine ligase A (346 aa).

Residues 138 to 332 form the ATP-grasp domain; the sequence is KRLFLAAGVE…FAELCERICR (195 aa). Position 164–217 (164–217) interacts with ATP; the sequence is QLGFPLVVKPNSQGSTVGLSIVHSQAELQPAIELAGRYGDEVMLERFVAGREVT. Mg(2+) is bound by residues Asp-286, Glu-299, and Asn-301.

Belongs to the D-alanine--D-alanine ligase family. It depends on Mg(2+) as a cofactor. Mn(2+) serves as cofactor.

The protein resides in the cytoplasm. The enzyme catalyses 2 D-alanine + ATP = D-alanyl-D-alanine + ADP + phosphate + H(+). The protein operates within cell wall biogenesis; peptidoglycan biosynthesis. Functionally, cell wall formation. In Pseudomonas aeruginosa (strain ATCC 15692 / DSM 22644 / CIP 104116 / JCM 14847 / LMG 12228 / 1C / PRS 101 / PAO1), this protein is D-alanine--D-alanine ligase A.